Reading from the N-terminus, the 1561-residue chain is Rho GTPase-activating protein 190 (1561 aa).

4 consecutive FF domains span residues 252–320 (YQES…HMKK), 365–419 (YLQN…YLNS), 426–480 (KIGW…HQDD), and 482–547 (IEKS…HLRF). In terms of domain architecture, pG1 pseudoGTPase spans 592-765 (SGSDRTLNLL…EPYPSNHTDL (174 aa)). The pG2 pseudoGTPase domain occupies 766–926 (RILCCIFCGD…LKTAWDNKYE (161 aa)). Phosphoserine occurs at positions 973, 975, 985, 988, and 996. Residues 1054–1074 (KIRPKGPSQTLKVGEAPSRNC) form a disordered region. The region spanning 1349-1552 (AQFGKLMITS…TMIDQFPYLF (204 aa)) is the Rho-GAP domain.

Its activity is regulated as follows. Negatively regulated by integrin, bsk and Src/Src64B. GTPase-activating protein (GAP) for RhoA/Rho1 that plays an essential role in the stability of dorsal branches of mushroom body (MB) neurons. The MB neurons are the center for olfactory learning and memory. Acts by converting RhoA/Rho1 to an inactive GDP-bound state, leading to repress the RhoA/Rho1-Drok-MRLC signaling pathway thereby maintaining axon branch stability. The polypeptide is Rho GTPase-activating protein 190 (RhoGAPp190) (Drosophila melanogaster (Fruit fly)).